Reading from the N-terminus, the 354-residue chain is Falstatin (354 aa).

The first 21 residues, 1-21, serve as a signal peptide directing secretion; the sequence is MKSITFFVFNICSILALLSHC. Residues 226–236 carry the BC loop; binds and inhibits the active site cavity of cysteine proteases motif; sequence LEGNAGTGYLW. The interval 274-317 is disordered; sequence KYKIDEHDSSKNVNREIESPEQKESDSKPKKPQMQLLGGPDRMR. Residues 275–302 show a composition bias toward basic and acidic residues; it reads YKIDEHDSSKNVNREIESPEQKESDSKP.

The protein belongs to the protease inhibitor I71 family. Oligomer; probably composed of 10 monomers. In terms of processing, during the liver stage, proteolytically cleaved.

Its subcellular location is the secreted. It is found in the cytoplasmic vesicle. The protein localises to the secretory vesicle. The protein resides in the microneme. It localises to the host cytoplasm. Its subcellular location is the parasitophorous vacuole lumen. Its function is as follows. Cysteine protease inhibitor. Required for the invasion of host erythrocytes by merozoites. In the mosquito vector, essential for the gliding motility of hemocoel sporozoites and, therefore, for salivary gland invasion and the subsequent transmission from the mosquito to the mammalian host. Required for the invasion of host hepatocytes. During the liver stage, may prevent host hepatocyte cell death likely by inhibiting host cysteine proteases. In Plasmodium berghei (strain Anka), this protein is Falstatin.